A 415-amino-acid chain; its full sequence is Mannosylglycerate hydrolase (415 aa).

Residues tyrosine 23, 27–30 (WLWD), tyrosine 76, glutamine 98, and glycine 158 contribute to the substrate site. Aspartate 160 acts as the Proton donor in catalysis. Substrate-binding positions include arginine 193 and 344 to 345 (YW). Glutamate 388 acts as the Proton acceptor in catalysis.

The protein belongs to the glycosyl hydrolase 63 family. As to quaternary structure, homotetramer in solution.

It carries out the reaction (2R)-2-O-(alpha-D-mannosyl)-glycerate + H2O = D-mannose + (R)-glycerate. The enzyme catalyses (2R)-2-O-(alpha-D-glucopyranosyl)-glycerate + H2O = (R)-glycerate + D-glucose. With respect to regulation, activity is not stimulated by divalent cations and not affected in the presence of EDTA. Hydrolase that catalyzes the hydrolysis of mannosylglycerate (MG), a solute produced in response to osmotic stress in thermophiles, into mannose and glycerate. Can also hydrolyze glucosylglycerate (GG) to glucose and glycerate, with similar catalytic efficiency. Is highly specific for MG and GG, and cannot use mannosylglyceramide (MGA), glucosylglycerol, mannosylglucosylglycerate (MGG), glucosylglucosylglycerate (GGG) or trehalose as substrates. The protein is Mannosylglycerate hydrolase of Thermus thermophilus (strain ATCC BAA-163 / DSM 7039 / HB27).